We begin with the raw amino-acid sequence, 156 residues long: Small ribosomal subunit protein uS7 (156 aa).

It belongs to the universal ribosomal protein uS7 family. Part of the 30S ribosomal subunit. Contacts proteins S9 and S11.

In terms of biological role, one of the primary rRNA binding proteins, it binds directly to 16S rRNA where it nucleates assembly of the head domain of the 30S subunit. Is located at the subunit interface close to the decoding center, probably blocks exit of the E-site tRNA. This Streptococcus pyogenes serotype M3 (strain ATCC BAA-595 / MGAS315) protein is Small ribosomal subunit protein uS7.